Here is a 176-residue protein sequence, read N- to C-terminus: Translation initiation factor IF-3 (176 aa).

Belongs to the IF-3 family. In terms of assembly, monomer.

It localises to the cytoplasm. Its function is as follows. IF-3 binds to the 30S ribosomal subunit and shifts the equilibrium between 70S ribosomes and their 50S and 30S subunits in favor of the free subunits, thus enhancing the availability of 30S subunits on which protein synthesis initiation begins. This is Translation initiation factor IF-3 from Streptococcus uberis (strain ATCC BAA-854 / 0140J).